Reading from the N-terminus, the 357-residue chain is Chorismate synthase (357 aa).

Arginine 47 contributes to the NADP(+) binding site. FMN is bound by residues 123–125 (RAS), glycine 281, 296–300 (KPTSS), and arginine 324.

Belongs to the chorismate synthase family. In terms of assembly, homotetramer. Requires FMNH2 as cofactor.

The catalysed reaction is 5-O-(1-carboxyvinyl)-3-phosphoshikimate = chorismate + phosphate. It functions in the pathway metabolic intermediate biosynthesis; chorismate biosynthesis; chorismate from D-erythrose 4-phosphate and phosphoenolpyruvate: step 7/7. In terms of biological role, catalyzes the anti-1,4-elimination of the C-3 phosphate and the C-6 proR hydrogen from 5-enolpyruvylshikimate-3-phosphate (EPSP) to yield chorismate, which is the branch point compound that serves as the starting substrate for the three terminal pathways of aromatic amino acid biosynthesis. This reaction introduces a second double bond into the aromatic ring system. In Chlamydia trachomatis serovar L2 (strain ATCC VR-902B / DSM 19102 / 434/Bu), this protein is Chorismate synthase.